The chain runs to 180 residues: Bifunctional protein PyrR (180 aa).

Substrate is bound by residues 39-40 (TR), 103-111 (DDVLYTGRT), and Arg-136. Residues 99 to 111 (VILIDDVLYTGRT) carry the PRPP-binding motif.

The protein belongs to the purine/pyrimidine phosphoribosyltransferase family. PyrR subfamily. In terms of assembly, homodimer and homohexamer; in equilibrium.

It catalyses the reaction UMP + diphosphate = 5-phospho-alpha-D-ribose 1-diphosphate + uracil. Functionally, regulates transcriptional attenuation of the pyrimidine nucleotide (pyr) operon by binding in a uridine-dependent manner to specific sites on pyr mRNA. This disrupts an antiterminator hairpin in the RNA and favors formation of a downstream transcription terminator, leading to a reduced expression of downstream genes. In terms of biological role, also displays a weak uracil phosphoribosyltransferase activity which is not physiologically significant. The polypeptide is Bifunctional protein PyrR (Halalkalibacterium halodurans (strain ATCC BAA-125 / DSM 18197 / FERM 7344 / JCM 9153 / C-125) (Bacillus halodurans)).